Reading from the N-terminus, the 131-residue chain is Metalloproteinase inhibitor (131 aa).

A signal peptide spans 1 to 29 (MVRKRALGLAGSALTLVLGAVGFTAPAQA). Disulfide bonds link C33–C39 and C93–C98.

Functionally, inhibits microbial metallo-proteinases, such as thermolysin, but not serine, thiol, or carboxyl proteinases. This Streptomyces nigrescens protein is Metalloproteinase inhibitor (smpI).